Consider the following 366-residue polypeptide: Probable methyltransferase-like protein 24 (366 aa).

Positions 1–29 are cleaved as a signal peptide; it reads MARERPPGRGCGVLRRCLLGAVLLFGLRL. The segment at 36–110 is disordered; sequence AGPGSPTRSA…GRPRRKGPRW (75 aa). Pro residues predominate over residues 44 to 63; that stretch reads SAPPGPAWRPPGPHLPPAPG. Residues 91–100 are compositionally biased toward low complexity; sequence TPEPGCCAPR.

The protein belongs to the methyltransferase superfamily.

Its subcellular location is the secreted. Probable methyltransferase. This is Probable methyltransferase-like protein 24 (METTL24) from Homo sapiens (Human).